Here is a 288-residue protein sequence, read N- to C-terminus: 2-hydroxy-6-oxononadienedioate/2-hydroxy-6-oxononatrienedioate hydrolase (288 aa).

His-267 (proton acceptor) is an active-site residue.

The protein belongs to the AB hydrolase superfamily. MhpC family. In terms of assembly, homodimer.

It catalyses the reaction (2Z,4E)-2-hydroxy-6-oxonona-2,4-dienedioate + H2O = (2Z)-2-hydroxypenta-2,4-dienoate + succinate + H(+). The enzyme catalyses (2Z,4E,7E)-2-hydroxy-6-oxonona-2,4,7-trienedioate + H2O = (2Z)-2-hydroxypenta-2,4-dienoate + fumarate + H(+). Its pathway is aromatic compound metabolism; 3-phenylpropanoate degradation. Catalyzes the cleavage of the C5-C6 bond of 2-hydroxy-6-oxononadienedioate and 2-hydroxy-6-oxononatrienedioate, a dienol ring fission product of the bacterial meta-cleavage pathway for degradation of phenylpropionic acid. The protein is 2-hydroxy-6-oxononadienedioate/2-hydroxy-6-oxononatrienedioate hydrolase of Klebsiella pneumoniae subsp. pneumoniae (strain ATCC 700721 / MGH 78578).